The primary structure comprises 218 residues: MTKKTLDLSVYFIAGSQNFSECSLDEATQKIALIIKSGVTVYQFRDKGTIYKEQKQRLSIAQKLQKVSEEAGVSFIVNDDVELARELNADGIHIGQTDESVSKVREKVGQEMWLGLSVTNADELKTAQSSGADYLGIGPIYPTNSKNDAAKPIGIKDLRLMLLENQLPIVGIGGITQDSLTELSAIGLDGLAVISLLTEAENPKKVAQMIRQKITKNG.

4-amino-2-methyl-5-(diphosphooxymethyl)pyrimidine contacts are provided by residues 43-47 and N78; that span reads QFRDK. 2 residues coordinate Mg(2+): D79 and D98. A 4-amino-2-methyl-5-(diphosphooxymethyl)pyrimidine-binding site is contributed by S117. 143 to 145 contributes to the 2-[(2R,5Z)-2-carboxy-4-methylthiazol-5(2H)-ylidene]ethyl phosphate binding site; that stretch reads TNS. K146 provides a ligand contact to 4-amino-2-methyl-5-(diphosphooxymethyl)pyrimidine. 2-[(2R,5Z)-2-carboxy-4-methylthiazol-5(2H)-ylidene]ethyl phosphate-binding positions include G174 and 194 to 195; that span reads IS.

It belongs to the thiamine-phosphate synthase family. The cofactor is Mg(2+).

It carries out the reaction 2-[(2R,5Z)-2-carboxy-4-methylthiazol-5(2H)-ylidene]ethyl phosphate + 4-amino-2-methyl-5-(diphosphooxymethyl)pyrimidine + 2 H(+) = thiamine phosphate + CO2 + diphosphate. The enzyme catalyses 2-(2-carboxy-4-methylthiazol-5-yl)ethyl phosphate + 4-amino-2-methyl-5-(diphosphooxymethyl)pyrimidine + 2 H(+) = thiamine phosphate + CO2 + diphosphate. The catalysed reaction is 4-methyl-5-(2-phosphooxyethyl)-thiazole + 4-amino-2-methyl-5-(diphosphooxymethyl)pyrimidine + H(+) = thiamine phosphate + diphosphate. Its pathway is cofactor biosynthesis; thiamine diphosphate biosynthesis; thiamine phosphate from 4-amino-2-methyl-5-diphosphomethylpyrimidine and 4-methyl-5-(2-phosphoethyl)-thiazole: step 1/1. In terms of biological role, condenses 4-methyl-5-(beta-hydroxyethyl)thiazole monophosphate (THZ-P) and 2-methyl-4-amino-5-hydroxymethyl pyrimidine pyrophosphate (HMP-PP) to form thiamine monophosphate (TMP). This Lactococcus lactis subsp. cremoris (strain MG1363) protein is Thiamine-phosphate synthase.